Reading from the N-terminus, the 302-residue chain is Nucleotide-binding protein Bcep1808_2900 (302 aa).

8 to 15 (GISGSGKS) is a binding site for ATP. 57 to 60 (DARS) provides a ligand contact to GTP.

This sequence belongs to the RapZ-like family.

Displays ATPase and GTPase activities. The sequence is that of Nucleotide-binding protein Bcep1808_2900 from Burkholderia vietnamiensis (strain G4 / LMG 22486) (Burkholderia cepacia (strain R1808)).